We begin with the raw amino-acid sequence, 413 residues long: 5'-deoxyadenosine deaminase (413 aa).

Positions 57 and 59 each coordinate Zn(2+). Residues Glu86 and His171 each contribute to the substrate site. Residue His198 participates in Zn(2+) binding. Positions 201 and 286 each coordinate substrate. Asp286 is a binding site for Zn(2+).

The protein belongs to the metallo-dependent hydrolases superfamily. MTA/SAH deaminase family. Homotetramer. The cofactor is Zn(2+).

It catalyses the reaction 5'-deoxyadenosine + H2O + H(+) = 5'-deoxyinosine + NH4(+). The catalysed reaction is S-adenosyl-L-homocysteine + H2O + H(+) = S-inosyl-L-homocysteine + NH4(+). The enzyme catalyses S-methyl-5'-thioadenosine + H2O + H(+) = S-methyl-5'-thioinosine + NH4(+). It carries out the reaction adenosine + H2O + H(+) = inosine + NH4(+). It functions in the pathway amino-acid biosynthesis; S-adenosyl-L-methionine biosynthesis. Functionally, catalyzes the deamination of three SAM-derived enzymatic products, namely 5'-deoxyadenosine, S-adenosyl-L-homocysteine, and 5'-methylthioadenosine, to produce the inosine analogs. Can also deaminate adenosine. The preferred substrate for this enzyme is 5'-deoxyadenosine, but all these substrates are efficiently deaminated. Likely functions in a S-adenosyl-L-methionine (SAM) recycling pathway from S-adenosyl-L-homocysteine (SAH) produced from SAM-dependent methylation reactions. May also be involved in the recycling of 5'-deoxyadenosine, whereupon the 5'-deoxyribose moiety of 5'-deoxyinosine is further metabolized to deoxyhexoses used for the biosynthesis of aromatic amino acids in methanogens. The chain is 5'-deoxyadenosine deaminase from Methanothrix thermoacetophila (strain DSM 6194 / JCM 14653 / NBRC 101360 / PT) (Methanosaeta thermophila).